The chain runs to 734 residues: Photosystem I P700 chlorophyll a apoprotein A2 (734 aa).

A run of 8 helical transmembrane segments spans residues 46–69, 135–158, 175–199, 273–291, 330–353, 369–395, 417–439, and 517–535; these read IFAS…FHVA, LYTG…LHLQ, LNHH…HVAI, MAHH…GHMY, IHFQ…QHMY, AALY…IFFI, AIIS…LYVH, and FLVH…LILV. 2 residues coordinate [4Fe-4S] cluster: Cys559 and Cys568. 2 consecutive transmembrane segments (helical) span residues 575–596 and 643–665; these read AFYL…YWHW and LSVW…MFLI. Chlorophyll a is bound by residues His654, Met662, and Tyr670. Trp671 is a binding site for phylloquinone. A helical transmembrane segment spans residues 707 to 727; sequence LVGLAHFSVGYIFTYAAFLIA.

This sequence belongs to the PsaA/PsaB family. In terms of assembly, the PsaA/B heterodimer binds the P700 chlorophyll special pair and subsequent electron acceptors. PSI consists of a core antenna complex that captures photons, and an electron transfer chain that converts photonic excitation into a charge separation. The eukaryotic PSI reaction center is composed of at least 11 subunits. The cofactor is P700 is a chlorophyll a/chlorophyll a' dimer, A0 is one or more chlorophyll a, A1 is one or both phylloquinones and FX is a shared 4Fe-4S iron-sulfur center..

It localises to the plastid. The protein resides in the chloroplast thylakoid membrane. The catalysed reaction is reduced [plastocyanin] + hnu + oxidized [2Fe-2S]-[ferredoxin] = oxidized [plastocyanin] + reduced [2Fe-2S]-[ferredoxin]. PsaA and PsaB bind P700, the primary electron donor of photosystem I (PSI), as well as the electron acceptors A0, A1 and FX. PSI is a plastocyanin-ferredoxin oxidoreductase, converting photonic excitation into a charge separation, which transfers an electron from the donor P700 chlorophyll pair to the spectroscopically characterized acceptors A0, A1, FX, FA and FB in turn. Oxidized P700 is reduced on the lumenal side of the thylakoid membrane by plastocyanin. The chain is Photosystem I P700 chlorophyll a apoprotein A2 from Hordeum vulgare (Barley).